Reading from the N-terminus, the 465-residue chain is Na(+)-translocating NADH-quinone reductase subunit A (465 aa).

This sequence belongs to the NqrA family. As to quaternary structure, composed of six subunits; NqrA, NqrB, NqrC, NqrD, NqrE and NqrF.

It catalyses the reaction a ubiquinone + n Na(+)(in) + NADH + H(+) = a ubiquinol + n Na(+)(out) + NAD(+). In terms of biological role, NQR complex catalyzes the reduction of ubiquinone-1 to ubiquinol by two successive reactions, coupled with the transport of Na(+) ions from the cytoplasm to the periplasm. NqrA to NqrE are probably involved in the second step, the conversion of ubisemiquinone to ubiquinol. In Chlamydia trachomatis serovar L2 (strain ATCC VR-902B / DSM 19102 / 434/Bu), this protein is Na(+)-translocating NADH-quinone reductase subunit A.